A 421-amino-acid polypeptide reads, in one-letter code: Solute carrier family 35 member F3 (421 aa).

Positions 25–45 (EGEERPRDSPGPAEAQAPAGV) are disordered. 10 helical membrane-spanning segments follow: residues 66–86 (IFWG…STQL), 98–118 (FTLT…YYVG), 149–169 (VFFT…YLYL), 179–199 (DVSV…WIVL), 208–228 (IVAA…DGFH), 232–252 (VIGI…KVLF), 266–286 (LFLS…PIIL), 305–325 (LCGF…GIAV), 326–346 (TYPT…AVID), and 352–372 (IVFN…FLLL). Positions 393–421 (KKEEPAEGAADLSSGPQSKNRRARPSFAR) are disordered. Positions 411-421 (KNRRARPSFAR) are enriched in basic residues.

This sequence belongs to the SLC35F solute transporter family. In terms of tissue distribution, expressed at the highest levels in the adult cerebellum.

The protein localises to the membrane. It carries out the reaction thiamine(in) = thiamine(out). In terms of biological role, mediates thiamine transport. This chain is Solute carrier family 35 member F3, found in Homo sapiens (Human).